Reading from the N-terminus, the 296-residue chain is Protease HtpX homolog (296 aa).

The next 2 helical transmembrane spans lie at 14–34 and 38–58; these read VFLLIGFLALVGIVGAAVGYL and SLVTGIIGALLVGVIYAVIMI. Residue His144 participates in Zn(2+) binding. Residue Glu145 is part of the active site. His148 provides a ligand contact to Zn(2+). The next 2 membrane-spanning stretches (helical) occupy residues 159–179 and 198–218; these read IALALTAAISFLINLGSNWWL and LLVFILSLVVMIFAPLVAAVI. Glu227 is a Zn(2+) binding site.

The protein belongs to the peptidase M48B family. The cofactor is Zn(2+).

The protein resides in the cell membrane. The polypeptide is Protease HtpX homolog (Leuconostoc citreum (strain KM20)).